Consider the following 92-residue polypeptide: DNA-directed RNA polymerase subunit Rpo11 (92 aa).

The protein belongs to the archaeal Rpo11/eukaryotic RPB11/RPC19 RNA polymerase subunit family. In terms of assembly, part of the RNA polymerase complex.

It localises to the cytoplasm. The catalysed reaction is RNA(n) + a ribonucleoside 5'-triphosphate = RNA(n+1) + diphosphate. Its function is as follows. DNA-dependent RNA polymerase (RNAP) catalyzes the transcription of DNA into RNA using the four ribonucleoside triphosphates as substrates. The chain is DNA-directed RNA polymerase subunit Rpo11 from Methanosarcina acetivorans (strain ATCC 35395 / DSM 2834 / JCM 12185 / C2A).